A 687-amino-acid polypeptide reads, in one-letter code: Glycine--tRNA ligase beta subunit (687 aa).

The protein belongs to the class-II aminoacyl-tRNA synthetase family. In terms of assembly, tetramer of two alpha and two beta subunits.

The protein localises to the cytoplasm. It carries out the reaction tRNA(Gly) + glycine + ATP = glycyl-tRNA(Gly) + AMP + diphosphate. This Neisseria gonorrhoeae (strain ATCC 700825 / FA 1090) protein is Glycine--tRNA ligase beta subunit.